The following is a 494-amino-acid chain: MLASGLLLVASVAFLSVLVLMSVWKQRKLSGKLPPGPTPLPFIGNYLQLNTEKMYSSLMKISQRYGPVFTIHLGPRRVVVLCGQEAVKEALVDQAEEFSGRGEQATFDWLFKGYGVAFSSGERAKQLRRFSIATLRDFGVGKRGIEERIQEEAGFLIESFRKTNGALIDPTFYLSRTVSNVISSIVFGDRFDYEDKEFLSLLRMMLGSFQFTATSTGQLYEMFSSVMKHLPGPQQQAFKELQGLEDFITKKVEQNQRTLDPNSPRDFIDSFLIRMLEEKKNPNTEFYMKNLVLTTLNLFFAGTETVSTTLRYGFLLLMKHPDIEAKVHEEIDRVIGRNRQAKYEDRMKMPYTEAVIHEIQRFADMIPMGLARRVTKDTKFREFLLPKGTEVFPMLGSVLKDPKFFSNPNDFNPKHFLDDKGQFKKSDAFVPFSIGKRYCFGEGLARMELFLFLTNIMQNFCFKSPQAPQDIDVSPRLVGFATIPPNYTMSFLSR.

S131 carries the phosphoserine modification. K379 is subject to N6-acetyllysine. C439 serves as a coordination point for heme.

This sequence belongs to the cytochrome P450 family. The cofactor is heme. As to expression, lung.

It localises to the endoplasmic reticulum membrane. The protein localises to the microsome membrane. It catalyses the reaction an organic molecule + reduced [NADPH--hemoprotein reductase] + O2 = an alcohol + oxidized [NADPH--hemoprotein reductase] + H2O + H(+). In terms of biological role, cytochromes P450 are a group of heme-thiolate monooxygenases. In liver microsomes, this enzyme is involved in an NADPH-dependent electron transport pathway. It oxidizes a variety of structurally unrelated compounds, including steroids, fatty acids, and xenobiotics. The protein is Cytochrome P450 2A3 (Cyp2a3) of Rattus norvegicus (Rat).